The following is a 155-amino-acid chain: Large ribosomal subunit protein eL24 (155 aa).

Residues 87-155 are disordered; the sequence is LELIKERRSQ…SFQKVKATSR (69 aa). The span at 89 to 129 shows a compositional bias: basic and acidic residues; it reads LIKERRSQKPSDRKAARDSKLAKDKEAKKAAKAARKAEKAK. Over residues 130 to 143 the composition is skewed to low complexity; that stretch reads AVASGASVVSKQQA.

Belongs to the eukaryotic ribosomal protein eL24 family. In terms of assembly, component of the large ribosomal subunit. Mature ribosomes consist of a small (40S) and a large (60S) subunit. The 40S subunit contains about 32 different proteins and 1 molecule of RNA (18S). The 60S subunit contains 45 different proteins and 3 molecules of RNA (25S, 5.8S and 5S).

It is found in the cytoplasm. Component of the ribosome, a large ribonucleoprotein complex responsible for the synthesis of proteins in the cell. The small ribosomal subunit (SSU) binds messenger RNAs (mRNAs) and translates the encoded message by selecting cognate aminoacyl-transfer RNA (tRNA) molecules. The large subunit (LSU) contains the ribosomal catalytic site termed the peptidyl transferase center (PTC), which catalyzes the formation of peptide bonds, thereby polymerizing the amino acids delivered by tRNAs into a polypeptide chain. The nascent polypeptides leave the ribosome through a tunnel in the LSU and interact with protein factors that function in enzymatic processing, targeting, and the membrane insertion of nascent chains at the exit of the ribosomal tunnel. In Candida albicans (strain SC5314 / ATCC MYA-2876) (Yeast), this protein is Large ribosomal subunit protein eL24.